The chain runs to 431 residues: Citrate synthase (431 aa).

Active-site residues include His-306 and Asp-364.

Belongs to the citrate synthase family.

It carries out the reaction oxaloacetate + acetyl-CoA + H2O = citrate + CoA + H(+). It participates in carbohydrate metabolism; tricarboxylic acid cycle; isocitrate from oxaloacetate: step 1/2. In Bartonella henselae (strain ATCC 49882 / DSM 28221 / CCUG 30454 / Houston 1) (Rochalimaea henselae), this protein is Citrate synthase (gltA).